Here is a 240-residue protein sequence, read N- to C-terminus: ATP synthase subunit a (240 aa).

The next 6 membrane-spanning stretches (helical) occupy residues 41–61, 92–112, 121–141, 152–172, 191–211, and 212–232; these read WLVMAFLFLVSKFTLGNLEII, FFPMIATFALYIAVANLIGLI, SINTTLALTLIVWATHHVIGF, FIGPMKWLVPLMLPIELISNF, VLLGILFGLAGMFFAPLPIMV, and LGVLVSLVQAMVFVLLTVVYF.

This sequence belongs to the ATPase A chain family. In terms of assembly, F-type ATPases have 2 components, CF(1) - the catalytic core - and CF(0) - the membrane proton channel. CF(1) has five subunits: alpha(3), beta(3), gamma(1), delta(1), epsilon(1). CF(0) has three main subunits: a(1), b(2) and c(9-12). The alpha and beta chains form an alternating ring which encloses part of the gamma chain. CF(1) is attached to CF(0) by a central stalk formed by the gamma and epsilon chains, while a peripheral stalk is formed by the delta and b chains.

Its subcellular location is the cell inner membrane. Its function is as follows. Key component of the proton channel; it plays a direct role in the translocation of protons across the membrane. This chain is ATP synthase subunit a, found in Desulfotalea psychrophila (strain LSv54 / DSM 12343).